The chain runs to 199 residues: Cilia- and flagella-associated protein 20 (199 aa).

This sequence belongs to the CFAP20 family. In terms of tissue distribution, expressed in spermatocytes and chordotonal organs in sensory neurons of the antenna.

It is found in the nucleus. It localises to the nucleolus. The protein resides in the cell projection. The protein localises to the cilium. Its subcellular location is the cytoplasm. It is found in the cytoskeleton. It localises to the microtubule organizing center. The protein resides in the centrosome. The protein localises to the centriole. Its subcellular location is the flagellum. It is found in the cilium axoneme. Cilium- and flagellum-specific protein that plays a role in axonemal structure organization and motility. Microtubule inner protein (MIP) part of the dynein-decorated doublet microtubules (DMTs) in cilia axoneme, which is required for motile cilia beating. Involved in the regulation of the size and morphology of cilia. Required for sperm individualization, differentiation of the sperm flagellum and tubulin polyglycylation of axonemal microtubules. This Drosophila melanogaster (Fruit fly) protein is Cilia- and flagella-associated protein 20.